Consider the following 152-residue polypeptide: Deoxyuridine 5'-triphosphate nucleotidohydrolase (152 aa).

Substrate is bound by residues 71-73 (RSG), Asn-84, 88-90 (LID), and Met-98.

It belongs to the dUTPase family. Requires Mg(2+) as cofactor.

The catalysed reaction is dUTP + H2O = dUMP + diphosphate + H(+). It functions in the pathway pyrimidine metabolism; dUMP biosynthesis; dUMP from dCTP (dUTP route): step 2/2. Its function is as follows. This enzyme is involved in nucleotide metabolism: it produces dUMP, the immediate precursor of thymidine nucleotides and it decreases the intracellular concentration of dUTP so that uracil cannot be incorporated into DNA. The polypeptide is Deoxyuridine 5'-triphosphate nucleotidohydrolase (Shewanella piezotolerans (strain WP3 / JCM 13877)).